Reading from the N-terminus, the 122-residue chain is UPF0102 protein CLL_A1253 (122 aa).

Belongs to the UPF0102 family.

The sequence is that of UPF0102 protein CLL_A1253 from Clostridium botulinum (strain Eklund 17B / Type B).